The chain runs to 474 residues: Protein nucleotidyltransferase YdiU (474 aa).

ATP is bound by residues glycine 89, glycine 91, arginine 92, lysine 112, aspartate 124, glycine 125, arginine 175, and arginine 182. The Proton acceptor role is filled by aspartate 256. 2 residues coordinate Mg(2+): asparagine 257 and aspartate 266. ATP is bound at residue aspartate 266.

It belongs to the SELO family. The cofactor is Mg(2+). Mn(2+) serves as cofactor.

The enzyme catalyses L-seryl-[protein] + ATP = 3-O-(5'-adenylyl)-L-seryl-[protein] + diphosphate. The catalysed reaction is L-threonyl-[protein] + ATP = 3-O-(5'-adenylyl)-L-threonyl-[protein] + diphosphate. It carries out the reaction L-tyrosyl-[protein] + ATP = O-(5'-adenylyl)-L-tyrosyl-[protein] + diphosphate. It catalyses the reaction L-histidyl-[protein] + UTP = N(tele)-(5'-uridylyl)-L-histidyl-[protein] + diphosphate. The enzyme catalyses L-seryl-[protein] + UTP = O-(5'-uridylyl)-L-seryl-[protein] + diphosphate. The catalysed reaction is L-tyrosyl-[protein] + UTP = O-(5'-uridylyl)-L-tyrosyl-[protein] + diphosphate. Its function is as follows. Nucleotidyltransferase involved in the post-translational modification of proteins. It can catalyze the addition of adenosine monophosphate (AMP) or uridine monophosphate (UMP) to a protein, resulting in modifications known as AMPylation and UMPylation. In Corynebacterium glutamicum (strain ATCC 13032 / DSM 20300 / JCM 1318 / BCRC 11384 / CCUG 27702 / LMG 3730 / NBRC 12168 / NCIMB 10025 / NRRL B-2784 / 534), this protein is Protein nucleotidyltransferase YdiU.